The primary structure comprises 63 residues: Large ribosomal subunit protein bL28 (63 aa).

Belongs to the bacterial ribosomal protein bL28 family.

The protein is Large ribosomal subunit protein bL28 of Citrifermentans bemidjiense (strain ATCC BAA-1014 / DSM 16622 / JCM 12645 / Bem) (Geobacter bemidjiensis).